The chain runs to 458 residues: ATP synthase subunit beta (458 aa).

148–155 (GGAGVGKT) provides a ligand contact to ATP.

This sequence belongs to the ATPase alpha/beta chains family. F-type ATPases have 2 components, CF(1) - the catalytic core - and CF(0) - the membrane proton channel. CF(1) has five subunits: alpha(3), beta(3), gamma(1), delta(1), epsilon(1). CF(0) has three main subunits: a(1), b(2) and c(9-12). The alpha and beta chains form an alternating ring which encloses part of the gamma chain. CF(1) is attached to CF(0) by a central stalk formed by the gamma and epsilon chains, while a peripheral stalk is formed by the delta and b chains.

The protein resides in the cell inner membrane. The catalysed reaction is ATP + H2O + 4 H(+)(in) = ADP + phosphate + 5 H(+)(out). Its function is as follows. Produces ATP from ADP in the presence of a proton gradient across the membrane. The catalytic sites are hosted primarily by the beta subunits. The sequence is that of ATP synthase subunit beta from Francisella tularensis subsp. mediasiatica (strain FSC147).